The sequence spans 78 residues: DNA-directed RNA polymerase subunit Rpo5 (78 aa).

This sequence belongs to the archaeal Rpo5/eukaryotic RPB5 RNA polymerase subunit family. As to quaternary structure, part of the RNA polymerase complex.

It is found in the cytoplasm. It carries out the reaction RNA(n) + a ribonucleoside 5'-triphosphate = RNA(n+1) + diphosphate. Its function is as follows. DNA-dependent RNA polymerase (RNAP) catalyzes the transcription of DNA into RNA using the four ribonucleoside triphosphates as substrates. This is DNA-directed RNA polymerase subunit Rpo5 from Methanosarcina mazei (strain ATCC BAA-159 / DSM 3647 / Goe1 / Go1 / JCM 11833 / OCM 88) (Methanosarcina frisia).